A 164-amino-acid polypeptide reads, in one-letter code: Lipoprotein signal peptidase (164 aa).

4 helical membrane passes run 6-26 (LGVL…LWLL), 39-59 (VLPF…GWFS), 65-85 (GQIL…IWMA), and 88-108 (TTKL…GNAI). Active-site residues include aspartate 118 and aspartate 140. A helical transmembrane segment spans residues 141-161 (VAIVVGVAALLYDSLIGLPAA).

The protein belongs to the peptidase A8 family.

The protein resides in the cell inner membrane. The enzyme catalyses Release of signal peptides from bacterial membrane prolipoproteins. Hydrolyzes -Xaa-Yaa-Zaa-|-(S,diacylglyceryl)Cys-, in which Xaa is hydrophobic (preferably Leu), and Yaa (Ala or Ser) and Zaa (Gly or Ala) have small, neutral side chains.. It functions in the pathway protein modification; lipoprotein biosynthesis (signal peptide cleavage). Functionally, this protein specifically catalyzes the removal of signal peptides from prolipoproteins. The protein is Lipoprotein signal peptidase of Rhodopseudomonas palustris (strain ATCC BAA-98 / CGA009).